A 405-amino-acid chain; its full sequence is Pentatricopeptide repeat-containing protein At3g14580, mitochondrial (405 aa).

The N-terminal 37 residues, M1–R37, are a transit peptide targeting the mitochondrion. Residues N13–R44 are disordered. PPR repeat units follow at residues T94–E124, S130–P165, S166–I200, D201–P235, N236–P270, D271–P305, N306–P340, and S341–P375.

This sequence belongs to the PPR family. P subfamily.

It localises to the mitochondrion. The polypeptide is Pentatricopeptide repeat-containing protein At3g14580, mitochondrial (Arabidopsis thaliana (Mouse-ear cress)).